The following is a 208-amino-acid chain: Proheparin-binding EGF-like growth factor (208 aa).

The first 23 residues, 1 to 23 (MKLLPSVMLKLFLAAVLSALVTG), serve as a signal peptide directing secretion. The propeptide occupies 24–62 (ESLERLRRGLAAATSNPDPPTGSTNQLLPTGGDRAQGVQ). The Extracellular segment spans residues 24-160 (ESLERLRRGL…ENPLYTYDHT (137 aa)). 2 disordered regions span residues 35-57 (AATS…GGDR) and 80-104 (PQGL…LGKK). Residues 36-51 (ATSNPDPPTGSTNQLL) are compositionally biased toward polar residues. The O-linked (GalNAc...) threonine glycan is linked to T85. A compositionally biased stretch (basic residues) spans 91–102 (NGKKKKKGKGLG). The region spanning 104–144 (KRDPCLRKYKDYCIHGECRYLQEFRTPSCKCLPGYHGHRCH) is the EGF-like domain. 3 cysteine pairs are disulfide-bonded: C108/C121, C116/C132, and C134/C143. A propeptide spans 149 to 208 (PVENPLYTYDHTTVLAVVAVVLSSVCLLVIVGLLMFRYHRRGGYDLESEEKVKLGVASSH) (C-terminal). A helical transmembrane segment spans residues 161-184 (TVLAVVAVVLSSVCLLVIVGLLMF). At 185-208 (RYHRRGGYDLESEEKVKLGVASSH) the chain is on the cytoplasmic side.

Interacts with FBLN1. Interacts with EGFR and ERBB4. O-glycosylated. As to expression, most abundant in kidney, skeletal muscle, lung, spleen, brain and heart.

The protein localises to the secreted. Its subcellular location is the extracellular space. The protein resides in the cell membrane. In terms of biological role, growth factor that mediates its effects via EGFR, ERBB2 and ERBB4. Required for normal cardiac valve formation and normal heart function. Promotes smooth muscle cell proliferation. May be involved in macrophage-mediated cellular proliferation. It is mitogenic for fibroblasts, but not endothelial cells. It is able to bind EGF receptor/EGFR with higher affinity than EGF itself and is a far more potent mitogen for smooth muscle cells than EGF. Also acts as a diphtheria toxin receptor. The polypeptide is Proheparin-binding EGF-like growth factor (Hbegf) (Mus musculus (Mouse)).